The sequence spans 414 residues: Gamma-glutamyl phosphate reductase (414 aa).

The protein belongs to the gamma-glutamyl phosphate reductase family.

The protein localises to the cytoplasm. It carries out the reaction L-glutamate 5-semialdehyde + phosphate + NADP(+) = L-glutamyl 5-phosphate + NADPH + H(+). Its pathway is amino-acid biosynthesis; L-proline biosynthesis; L-glutamate 5-semialdehyde from L-glutamate: step 2/2. Its function is as follows. Catalyzes the NADPH-dependent reduction of L-glutamate 5-phosphate into L-glutamate 5-semialdehyde and phosphate. The product spontaneously undergoes cyclization to form 1-pyrroline-5-carboxylate. This is Gamma-glutamyl phosphate reductase from Clostridium beijerinckii (strain ATCC 51743 / NCIMB 8052) (Clostridium acetobutylicum).